Reading from the N-terminus, the 247-residue chain is MIDPIEQFHLNKIFTIGHIGNQEIAFTTSSAYMLLAVVLIAAMMLGAGRALVPGRFQSVVELAYEFVANTIRTSAGSHGMTFFPLVFSLFMFIFVSNIVGIIPYTFTVSSHIIVTFSLALLVFLTVIIYGFYKNGLKFFKLFVPSGIPAVILPLVVIIEIISFFSRPISHSVRLFANMLAGHVTLKVFASFVTMLGALGFVGKVGALLPLGLTVALTGLELMVAFLQAYVFTILTCIYLNDAIHPGH.

Transmembrane regions (helical) follow at residues 24–44 (IAFT…AAMM), 82–102 (FFPL…VGII), 112–132 (IIVT…YGFY), 141–161 (LFVP…IEII), 181–201 (GHVT…LGFV), and 206–226 (ALLP…VAFL).

Belongs to the ATPase A chain family. F-type ATPases have 2 components, CF(1) - the catalytic core - and CF(0) - the membrane proton channel. CF(1) has five subunits: alpha(3), beta(3), gamma(1), delta(1), epsilon(1). CF(0) has four main subunits: a, b, b' and c.

Its subcellular location is the cell inner membrane. Key component of the proton channel; it plays a direct role in the translocation of protons across the membrane. This is ATP synthase subunit a from Bradyrhizobium sp. (strain ORS 278).